A 427-amino-acid polypeptide reads, in one-letter code: Enolase (427 aa).

Residue Q163 coordinates (2R)-2-phosphoglycerate. E205 serves as the catalytic Proton donor. Mg(2+) contacts are provided by D242, E285, and D312. (2R)-2-phosphoglycerate is bound by residues K337, R366, S367, and K388. Residue K337 is the Proton acceptor of the active site.

Belongs to the enolase family. Mg(2+) serves as cofactor.

It localises to the cytoplasm. The protein localises to the secreted. Its subcellular location is the cell surface. It carries out the reaction (2R)-2-phosphoglycerate = phosphoenolpyruvate + H2O. It functions in the pathway carbohydrate degradation; glycolysis; pyruvate from D-glyceraldehyde 3-phosphate: step 4/5. Functionally, catalyzes the reversible conversion of 2-phosphoglycerate (2-PG) into phosphoenolpyruvate (PEP). It is essential for the degradation of carbohydrates via glycolysis. The polypeptide is Enolase (Bradyrhizobium diazoefficiens (strain JCM 10833 / BCRC 13528 / IAM 13628 / NBRC 14792 / USDA 110)).